The primary structure comprises 408 residues: Repulsive guidance molecule B homolog drag-1 (408 aa).

The N-terminal stretch at 1–22 is a signal peptide; sequence MSIVYLVSITFIFSVFKPITSC. At 23-387 the chain is on the extracellular side; that stretch reads RVEECAAWFQ…SEIFKKCIPS (365 aa). Residues asparagine 60, asparagine 134, asparagine 183, and asparagine 376 are each glycosylated (N-linked (GlcNAc...) asparagine). A helical transmembrane segment spans residues 388-408; that stretch reads KSIRFYPFLAIFFFALLSLLC.

Belongs to the repulsive guidance molecule (RGM) family. As to quaternary structure, interacts with unc-40 (via FN6 domain), dbl-1 and sma-6. As to expression, expressed in pharyngeal, hypodermal and intestinal cells.

The protein resides in the cell membrane. Functionally, probably in association with the cell surface receptor unc-40, positively modulates the BMP-like Sma/Mab signaling pathway through interaction with both the ligand dbl-1 and its type I receptor sma-6. Regulates body size and this may be through modulation of the Sma/Mab signaling pathway. The chain is Repulsive guidance molecule B homolog drag-1 from Caenorhabditis elegans.